Consider the following 141-residue polypeptide: Ribosome-binding factor A (141 aa).

Residues 120 to 141 (SPHVQRDLQENDDQEDDSEGSL) form a disordered region. The segment covering 129–141 (ENDDQEDDSEGSL) has biased composition (acidic residues).

Belongs to the RbfA family. In terms of assembly, monomer. Binds 30S ribosomal subunits, but not 50S ribosomal subunits or 70S ribosomes.

It is found in the cytoplasm. One of several proteins that assist in the late maturation steps of the functional core of the 30S ribosomal subunit. Associates with free 30S ribosomal subunits (but not with 30S subunits that are part of 70S ribosomes or polysomes). Required for efficient processing of 16S rRNA. May interact with the 5'-terminal helix region of 16S rRNA. In Zymomonas mobilis subsp. mobilis (strain ATCC 31821 / ZM4 / CP4), this protein is Ribosome-binding factor A.